The following is a 222-amino-acid chain: MTDYARYIDHTLLAANATEQQIVTLCDEAIAHHFYAVCVNSGYVPLVAEKLKGSAVQVCSVIGFPLGAGLTSSKAFEAKAAIDAGAQEIDMVINVGWLKSGKIDAVKADIQAVRGVCAAIPLKVILETCLLDDEQIVLVCEMCRQLDVAFVKTSTGFSTDGAREEHVRLMRSTVGSEMGVKASGAVRDRETAQRMIEAGATRIGTSSGVAIVSDDAAAAGNY.

Residue Asp-90 is the Proton donor/acceptor of the active site. Lys-152 acts as the Schiff-base intermediate with acetaldehyde in catalysis. The active-site Proton donor/acceptor is Lys-181.

The protein belongs to the DeoC/FbaB aldolase family. DeoC type 1 subfamily.

It is found in the cytoplasm. The catalysed reaction is 2-deoxy-D-ribose 5-phosphate = D-glyceraldehyde 3-phosphate + acetaldehyde. It functions in the pathway carbohydrate degradation; 2-deoxy-D-ribose 1-phosphate degradation; D-glyceraldehyde 3-phosphate and acetaldehyde from 2-deoxy-alpha-D-ribose 1-phosphate: step 2/2. In terms of biological role, catalyzes a reversible aldol reaction between acetaldehyde and D-glyceraldehyde 3-phosphate to generate 2-deoxy-D-ribose 5-phosphate. The chain is Deoxyribose-phosphate aldolase from Pectobacterium atrosepticum (strain SCRI 1043 / ATCC BAA-672) (Erwinia carotovora subsp. atroseptica).